We begin with the raw amino-acid sequence, 431 residues long: 3-phosphoshikimate 1-carboxyvinyltransferase (431 aa).

Positions 22, 23, and 27 each coordinate 3-phosphoshikimate. A phosphoenolpyruvate-binding site is contributed by Lys-22. Positions 94 and 122 each coordinate phosphoenolpyruvate. Ser-168, Ser-169, Gln-170, Ser-196, Asp-315, and Lys-342 together coordinate 3-phosphoshikimate. A phosphoenolpyruvate-binding site is contributed by Gln-170. The active-site Proton acceptor is the Asp-315. Phosphoenolpyruvate is bound by residues Arg-346, Arg-390, and Lys-414.

The protein belongs to the EPSP synthase family. As to quaternary structure, monomer.

Its subcellular location is the cytoplasm. It catalyses the reaction 3-phosphoshikimate + phosphoenolpyruvate = 5-O-(1-carboxyvinyl)-3-phosphoshikimate + phosphate. It functions in the pathway metabolic intermediate biosynthesis; chorismate biosynthesis; chorismate from D-erythrose 4-phosphate and phosphoenolpyruvate: step 6/7. Catalyzes the transfer of the enolpyruvyl moiety of phosphoenolpyruvate (PEP) to the 5-hydroxyl of shikimate-3-phosphate (S3P) to produce enolpyruvyl shikimate-3-phosphate and inorganic phosphate. The sequence is that of 3-phosphoshikimate 1-carboxyvinyltransferase from Nitrosomonas europaea (strain ATCC 19718 / CIP 103999 / KCTC 2705 / NBRC 14298).